The chain runs to 12345 residues: Muscle-specific protein 300 kDa (12345 aa).

Disordered regions lie at residues 1 to 68 and 121 to 152; these read MADS…STVT and WSDG…DAEN. Over 1 to 12295 the chain is Cytoplasmic; it reads MADSGGPGSK…GARFLGRVAR (12295 aa). The segment covering 19–28 has biased composition (gly residues); that stretch reads AGGGGAGAAG. The span at 45–60 shows a compositional bias: basic and acidic residues; it reads EQKSSREQVLEEEKSQ. Residues 249 to 273 form an LRR 1 repeat; it reads FKELENFLEGERTVREVPSADGVRT. Disordered regions lie at residues 295–325, 387–488, and 504–526; these read EGYV…RSVD, TVQV…RKLI, and GKSN…GRPA. Low complexity predominate over residues 299 to 321; that stretch reads SPRDSPSWSRSSYSSERSSVTPP. Composition is skewed to polar residues over residues 387–404 and 414–434; these read TVQV…STPQ and TTKT…QTGP. Residues 462–484 show a composition bias toward low complexity; sequence TITSTTTKSTSSSTSATSSSSTS. Residues 511 to 520 are compositionally biased toward acidic residues; the sequence is NDIDIDNDSD. Calponin-homology (CH) domains lie at 630-737 and 777-882; these read RVQK…LYFQ and QGAR…HKYP. Residues 823-847 form an LRR 2 repeat; the sequence is LVNLAELKKTSNRQRLETAFDVAES. The stretch at 919–952 is one TPR 1 repeat; it reads SSFPRDFGEYLLARSEVDAHLAAYNRLKQLIESQ. LRR repeat units lie at residues 1089–1112, 1389–1411, and 1616–1642; these read CCLI…YGHE, HLFH…IHQW, and LKDV…ILQR. A TPR 2 repeat occupies 1603-1636; sequence LEFRLDENAFYQSLKDVEKELQLEQQALNRNEDV. Residues 1903–1935 form an HAT 1 repeat; the sequence is TGWNQAYTETSDKLQALKGTQAVWSEFVDQKND. 2 LRR repeats span residues 2087-2109 and 2558-2581; these read KQLD…IAEA and QQQI…FGQA. Residues 2109-2233 form the Calponin-homology (CH) 3 domain; the sequence is AKRLKGEITK…SRWTAVHENA (125 aa). One copy of the TPR 3 repeat lies at 2663–2696; it reads ADRIQKYNLISQALREYADSKDKFSKELKKAEDL. A disordered region spans residues 2699–2724; the sequence is AIPQQPRDETELHQASEKTRKTMEQL. A compositionally biased stretch (basic and acidic residues) spans 2704–2724; the sequence is PRDETELHQASEKTRKTMEQL. LRR repeat units lie at residues 2728-2751, 2935-2959, and 3030-3053; these read KLSL…IGEP, CRAL…VDEL, and SSDK…IDDC. Positions 2894–2962 form a coiled coil; sequence EQELRRRSKE…KQKVDELRNL (69 aa). The Spectrin 1 repeat unit spans residues 3110–3207; sequence LWSQYEQSNE…AVSKALTSYI (98 aa). Residues 3346–3379 form a TPR 4 repeat; that stretch reads KAKVPTTDELYPTLATKKAALQNYKTQLQEITLH. LRR repeat units lie at residues 3370–3393, 3437–3462, 3530–3556, and 3611–3634; these read KTQL…AVTL, LEKA…TFEK, LVKL…WMKN, and NLKL…SIAK. The Spectrin 2 repeat unit spans residues 3539–3633; it reads KWDEFDTIIE…LKNLCKESIA (95 aa). The TPR 5 repeat unit spans residues 3629–3662; the sequence is KESIAKYVNYVKDHESFDKDFDSFKQNLQSSVDE. Residues 3706-3739 form an HAT 2 repeat; it reads KLYGHTSPEGREIIRQQLRALRTLWDNYTDDLNS. Residues 3748 to 3771 form an LRR 15 repeat; that stretch reads LLQFNEFSIAQDQLTKWLKDVDKA. A Spectrin 3 repeat occupies 4177–4273; that stretch reads SYQDILNQTV…YDQVGQDCAK (97 aa). A TPR 6 repeat occupies 4360–4393; sequence EVMARDLANLHADFEKFGASLSDVKSGLENRLQQ. An HAT 3 repeat occupies 4371–4403; sequence ADFEKFGASLSDVKSGLENRLQQWNDYEINLDR. One copy of the Spectrin 4 repeat lies at 4611–4701; that stretch reads FDEIADSLKS…GKLQKRAQNY (91 aa). LRR repeat units lie at residues 4654-4676 and 4742-4763; these read NDIN…LPEK and EQIS…LADE. The HAT 4 repeat unit spans residues 4799–4830; it reads EWESLLTTISSTIEAIEARLQHWSEYEQLRDQ. A Spectrin 5 repeat occupies 4820-4919; that stretch reads HWSEYEQLRD…VKELNNRWQQ (100 aa). The LRR 18 repeat unit spans residues 4839 to 4863; it reads DNNLHAIDLKEDLPKKRAQLDALKA. One copy of the HAT 5 repeat lies at 4894-4926; it reads ASGPELVTKYQQIFHKVKELNNRWQQYVTSHED. LRR repeat units follow at residues 5266-5289 and 5333-5357; these read QIDI…EKQV and SSVY…RDQH. The stretch at 5645 to 5678 is one TPR 7 repeat; it reads SAEPEDCEIIEQEVALLQEEFDAYREALNKAKDY. LRR repeat units follow at residues 5761-5784, 5820-5843, and 5979-6002; these read SNAI…VMRR, PGTL…FETG, and TKFD…VNSH. Residues 5791–5895 form a Spectrin 6 repeat; that stretch reads EHQQHHSLYE…DLNDVRQKLA (105 aa). An HAT 6 repeat occupies 6088–6120; sequence SEWETLQTISRDARSSLESCLAAWQTFLQKFNK. Spectrin repeat units lie at residues 6321-6405 and 6424-6530; these read RWND…DKLK and AYHQ…RLLE. 2 coiled-coil regions span residues 6356-6397 and 6454-6484; these read MKTL…VNRL and REQT…LNAK. Residues 6363 to 6387 form an LRR 24 repeat; sequence YKTLSNELKLKGNELEQLQSEARDL. The TPR 8 repeat unit spans residues 6522 to 6555; sequence VQIKNRLLESLAKFQEYEDTLDSIMRNLETYEPI. LRR repeat units follow at residues 6531-6554 and 6560-6587; these read SLAK…TYEP and LDAP…LNNE. Positions 6567-6597 form a coiled coil; the sequence is LELAQNQLRCAQEMQNKLNNEKSRLAAAVQA. A disordered region spans residues 6631–6657; that stretch reads EDLLDQKPPPKTRSSTGGVSTDDDKDE. One copy of the TPR 9 repeat lies at 6660–6695; that stretch reads VEIQVELSDVNEALLDPIAHERVKNYRRIVRLNSAH. Residues 7004 to 7026 form an LRR 27 repeat; sequence SALRNLNTENRNLSGVLKAELDR. One copy of the TPR 10 repeat lies at 7161 to 7195; that stretch reads EMETATEGELRTTSLPVLEEQLAHYKKLLSDAENK. 4 LRR repeats span residues 7219–7242, 7300–7318, 7319–7339, and 7340–7361; these read LKLN…IDDR, KELK…DDLP, ELQS…DQLA, and HLRQ…IIAF. A coiled-coil region spans residues 7419-7457; that stretch reads KNSITEQLQSLKNQLQNLRKAVESQRQKHQLQLESHKKM. An LRR 32 repeat occupies 7524-7547; sequence SSLLEMLSEGRSLVASLPHELEER. An HAT 7 repeat occupies 7644-7676; it reads TKLTNTLANAKTQQSELEKEAERWREYQQSIDR. One copy of the TPR 11 repeat lies at 7654–7687; the sequence is KTQQSELEKEAERWREYQQSIDRVKATIERTKFV. LRR repeat units follow at residues 7692–7714, 7752–7777, and 7816–7840; these read QNLA…VQSQ, QDLV…GFEN, and LREE…ILTF. The TPR 12 repeat unit spans residues 7759–7792; it reads EQRRDNLQQLAEHWDGFENSLHAWEKALGRLEDK. A coiled-coil region spans residues 7799–7935; sequence TVRSRRHLED…NSQVQQAAEE (137 aa). Residues 7878-7911 form a TPR 13 repeat; that stretch reads SKDLEEIEQVFRRISQLQDKLNALHEQLQSVHVY. LRR repeat units lie at residues 8178–8201, 8238–8264, 8298–8321, and 8354–8377; these read KISV…EWDQ, EKTL…HFRN, EQTL…IIQE, and DELL…SLDG. The TPR 14 repeat unit spans residues 8431–8464; the sequence is QQGITMIANAMHGQKKRQQEIDEYQQHLLELEQW. One copy of the LRR 40 repeat lies at 8534–8557; sequence EQLQSIITILREQVTVATKRIFTI. 6 disordered regions span residues 8583–8616, 8966–9023, 9131–9158, 9361–9459, 9502–9735, and 9769–9797; these read IKPP…EEEI, QKPT…LPAP, EFEP…QVVA, GKES…PDSD, LVED…TSIS, and TMQL…EQQL. Residues 8601–8611 show a composition bias toward polar residues; that stretch reads SNENTIDSSSM. Over residues 8982–9011 the composition is skewed to low complexity; sequence TQVTTTTRTTTATTQEQEQPEQQTQPTTTE. Residues 9136 to 9151 are compositionally biased toward basic and acidic residues; the sequence is SPHEESTKSDLVKPQE. Over residues 9394-9404 the composition is skewed to basic residues; that stretch reads KRRRKKKKRRD. The span at 9410–9419 shows a compositional bias: acidic residues; it reads ELEQEQETEP. Positions 9420-9439 are enriched in low complexity; the sequence is EPVAAVKEPEVSSDVPVSPE. A compositionally biased stretch (basic and acidic residues) spans 9440 to 9451; the sequence is DSPRDTVRHESI. 3 stretches are compositionally biased toward polar residues: residues 9544–9563, 9587–9597, and 9605–9625; these read AVQT…SQTL, ISTTEIQTDVS, and EISS…TTPK. Residues 9658-9680 show a composition bias toward low complexity; that stretch reads TSEQSTVTETTTTTETHVQTTTP. Basic and acidic residues predominate over residues 9681-9698; it reads EPREQTEVIKPETAHEET. The stretch at 9699 to 9721 is one LRR 41 repeat; it reads STVELVQFADGEMQTTPPGDQQP. The span at 9711–9735 shows a compositional bias: polar residues; the sequence is MQTTPPGDQQPASLDDSSLTATSIS. Positions 9777–9788 are enriched in basic residues; sequence KKSKKDKKKKQK. 4 LRR repeats span residues 9995–10019, 10073–10096, 10252–10276, and 10353–10376; these read SNVL…ILEV, EEKL…VVQL, KEFT…SLEQ, and RDEL…TSAD. Coiled-coil stretches lie at residues 10072–10099 and 10172–10257; these read SEEK…LERQ and LSAK…FTKI. One copy of the TPR 15 repeat lies at 10231–10264; sequence QAERERVLQLQSLAEEYEQTLKEFTKITVLADKL. The stretch at 10426 to 10458 is one HAT 8 repeat; that stretch reads IVLLKLREEVALYLHRLLVFKEIWVQYEQQTDK. LRR repeat units lie at residues 10512-10535, 10570-10593, and 10644-10667; these read EKSL…QLED, EREL…EEEL, and AEEL…ISNQ. One copy of the TPR 16 repeat lies at 10854-10888; sequence VVAWNDTSENLQQLRTRYQRAVELWDKYRNASAAV. The HAT 9 repeat unit spans residues 10855–10887; sequence VAWNDTSENLQQLRTRYQRAVELWDKYRNASAA. 2 LRR repeats span residues 10907–10929 and 11021–11043; these read DALQ…ILEL and AHLQ…HQNS. The stretch at 11016–11046 forms a coiled coil; that stretch reads LAALRAHLQTLARTEEQLRQLKERHQNSEVA. An HAT 10 repeat occupies 11070 to 11104; sequence DTFQEYHRLSTRLARSQNSSEALRLWRQYLQHVQS. Residues 11072 to 11105 form a TPR 17 repeat; sequence FQEYHRLSTRLARSQNSSEALRLWRQYLQHVQSF. The LRR 51 repeat unit spans residues 11197-11222; that stretch reads EAERNALQLRYIHLKRVPHLKHRLDA. 2 coiled-coil regions span residues 11220-11247 and 11281-11308; these read LDAM…LARH and LQRV…AQKL. LRR repeat units lie at residues 11342–11365, 11398–11422, 11670–11692, 11697–11720, and 11744–11766; these read SALE…DMKT, LSNY…VEKD, EELE…LAMS, PENI…LTPR, and EATN…ENQQ. Residues 11655–11685 adopt a coiled-coil conformation; the sequence is KHKLEERQMELRAKLEELESQSVNLRQLEQI. The stretch at 11776–11806 forms a coiled coil; it reads LQRLESLEKKLQDAQQHVQQADNLAQEAKTR. The stretch at 11804–11836 is one HAT 11 repeat; it reads KTRTKQQPQLKQLLELVSAYTTLWQTVQTRIVT. LRR repeat units follow at residues 11959–11981 and 12198–12220; these read DTVA…RQQH and SRLT…YIVK. A disordered region spans residues 12253-12272; the sequence is SMQAAAPNTENANNTDGGDA. The span at 12256-12267 shows a compositional bias: low complexity; the sequence is AAAPNTENANNT. Positions 12287 to 12345 constitute a KASH domain; the sequence is ARFLGRVARASLPIQALMLLLLGVATLVPHGEDYTCMFSNTFARSLEPMLSYPHGPPPT. The chain crosses the membrane as a helical; Anchor for type IV membrane protein span at residues 12296 to 12316; that stretch reads ASLPIQALMLLLLGVATLVPH. The LRR 59 repeat unit spans residues 12301–12323; it reads QALMLLLLGVATLVPHGEDYTCM. At 12317-12345 the chain is on the perinuclear space side; the sequence is GEDYTCMFSNTFARSLEPMLSYPHGPPPT.

The protein belongs to the nesprin family. Core component of LINC complexes which are composed of inner nuclear membrane SUN domain-containing proteins coupled to outer nuclear membrane KASH domain-containing nesprins. Interacts with klar; this interaction allows the anchoring of the Msp300 nuclear ring structure to the nuclear envelope. Interacts with sls; this interaction mediates the recruitment of Msp300 to the Z-disks.

It is found in the nucleus membrane. The protein resides in the cytoplasm. Its subcellular location is the myofibril. The protein localises to the sarcomere. It localises to the z line. It is found in the cytoskeleton. The protein resides in the microtubule organizing center. Its subcellular location is the perinuclear region. In terms of biological role, component of the LINC (LInker of Nucleoskeleton and Cytoskeleton) complex involved in the connection between the nuclear lamina and the cytoskeleton. Collaborates with Klar to promote even spacing of the myonuclei at the periphery of striated muscle fibers by mediating a tight association between a nuclear ring structure of Msp300 and the plus ends of a unique astral MT network. In addition, is essential for anchoring nuclei, mitochondria and endoplasmic reticulum (ER) structures to the Z-disks. In fat body cells, part of perinuclear non-centrosomal microtubule-organizing centers (ncMTOCs) which function to accommodate the organization of microtubule (MT) networks to control nuclear positioning and dynein motor-based retrograde endosomal trafficking. Functions as the primary organizer of the ncMTOC by recruiting Patronin, shot and msps to the organizing centre. Within the ncMTOC, Msp300 and shot anchors the ncMTOC at the nuclear surface and recruits the MT minus-end regulators Patronin and Nin for assembly, anchoring and/or stabilization of circumferential and radial MTs at the ncMTOCs. Patronin, and perhaps Nin, recruits msps to the ncMTOC for the gamma-tubulin-independent elongation of radial MTs. The sequence is that of Muscle-specific protein 300 kDa from Drosophila melanogaster (Fruit fly).